Here is a 108-residue protein sequence, read N- to C-terminus: Transmembrane protein 141 (108 aa).

2 consecutive transmembrane segments (helical) span residues 32–52 (MKGV…QMFI) and 58–78 (YPLQ…SYGV).

This sequence belongs to the TMEM141 family.

Its subcellular location is the membrane. The sequence is that of Transmembrane protein 141 (TMEM141) from Homo sapiens (Human).